The chain runs to 391 residues: Formate-dependent phosphoribosylglycinamide formyltransferase (391 aa).

N(1)-(5-phospho-beta-D-ribosyl)glycinamide is bound by residues 20–21 and Glu-80; that span reads EL. ATP contacts are provided by residues Arg-112, Lys-153, 158 to 163, 193 to 196, and Glu-201; these read SSGKGQ and EGFI. One can recognise an ATP-grasp domain in the interval 117–306; the sequence is RLAAETLGLP…EFALHVRAIL (190 aa). Residues Glu-265 and Glu-277 each coordinate Mg(2+). Residues Asp-284, Lys-354, and 361–362 contribute to the N(1)-(5-phospho-beta-D-ribosyl)glycinamide site; that span reads RR.

Belongs to the PurK/PurT family. Homodimer.

The catalysed reaction is N(1)-(5-phospho-beta-D-ribosyl)glycinamide + formate + ATP = N(2)-formyl-N(1)-(5-phospho-beta-D-ribosyl)glycinamide + ADP + phosphate + H(+). The protein operates within purine metabolism; IMP biosynthesis via de novo pathway; N(2)-formyl-N(1)-(5-phospho-D-ribosyl)glycinamide from N(1)-(5-phospho-D-ribosyl)glycinamide (formate route): step 1/1. Involved in the de novo purine biosynthesis. Catalyzes the transfer of formate to 5-phospho-ribosyl-glycinamide (GAR), producing 5-phospho-ribosyl-N-formylglycinamide (FGAR). Formate is provided by PurU via hydrolysis of 10-formyl-tetrahydrofolate. The polypeptide is Formate-dependent phosphoribosylglycinamide formyltransferase (Shewanella oneidensis (strain ATCC 700550 / JCM 31522 / CIP 106686 / LMG 19005 / NCIMB 14063 / MR-1)).